The chain runs to 84 residues: Inactive transposase YbfQ (84 aa).

This is Inactive transposase YbfQ (ybfQ) from Escherichia coli (strain K12).